The sequence spans 88 residues: Conotoxin MaIr34 (88 aa).

A signal peptide spans 1-21 (MKLTCVIVAVLFLTAWTFVMA). Positions 22-53 (DDPRDGPDTAVRGGKRFWKARNEMNSAASKLN) are excised as a propeptide. 3 disulfide bridges follow: C57–C75, C64–C79, and C74–C83.

This sequence belongs to the conotoxin O1 superfamily. As to expression, expressed by the venom duct.

It is found in the secreted. The protein is Conotoxin MaIr34 of Conus marmoreus (Marble cone).